Reading from the N-terminus, the 139-residue chain is MGGGERYNIPAPQSRNVSKNQQQLNRQKTKEQNSQMKIVHKKKERGHGYNSSAAAWQAMQNGGKNKNFPNNQSWNSSLSGPRLLFKSQANQNYAGAKFSEPPSPSVLPKPPSHWVPVSFNPSDKEIMTFQLKTLLKVQV.

Disordered regions lie at residues 1 to 51 (MGGG…GYNS), 61 to 80 (NGGKNKNFPNNQSWNSSLSG), and 89 to 110 (ANQNYAGAKFSEPPSPSVLPKP). Composition is skewed to polar residues over residues 11–36 (APQSRNVSKNQQQLNRQKTKEQNSQM) and 61–79 (NGGKNKNFPNNQSWNSSLS). Residues 99 to 105 (SEPPSPS) carry the SH3-binding motif. Pro residues predominate over residues 101 to 110 (PPSPSVLPKP).

Belongs to the PNRC family. PNRC2 subfamily. Interacts with UPF1/RENT1; preferentially interacts with hyperphosphorylated form. Interacts with DCP1A. Interacts with many nuclear receptors including ESR1, ESRRA, ESRRG, NR3C1/GR, NR5A1, PGR, TR, RAR and RXR. In terms of tissue distribution, expressed in heart, lung, muscle and brain.

It is found in the nucleus. It localises to the cytoplasm. The protein resides in the P-body. Its function is as follows. Involved in nonsense-mediated mRNA decay (NMD) by acting as a bridge between the mRNA decapping complex and the NMD machinery. May act by targeting the NMD machinery to the P-body and recruiting the decapping machinery to aberrant mRNAs. Required for UPF1/RENT1 localization to the P-body. Plays a role in glucocorticoid receptor-mediated mRNA degradation by interacting with the glucocorticoid receptor NR3C1 in a ligand-dependent manner when it is bound to the 5' UTR of target mRNAs and recruiting the RNA helicase UPF1 and the mRNA-decapping enzyme DCP1A, leading to RNA decay. Also acts as a nuclear receptor coactivator. May play a role in controlling the energy balance between energy storage and energy expenditure. In Homo sapiens (Human), this protein is Proline-rich nuclear receptor coactivator 2 (PNRC2).